A 443-amino-acid chain; its full sequence is KH domain-containing, RNA-binding, signal transduction-associated protein 1 (443 aa).

The interval 1–96 is disordered; sequence MQRRDDPAAR…LPPSATASVK (96 aa). Low complexity predominate over residues 10–21; that stretch reads RMSRSSGRSGSM. A phosphoserine mark is found at S18, S20, and S29. T33 bears the Phosphothreonine mark. R45 carries the asymmetric dimethylarginine; by PRMT1 modification. R52 is subject to Asymmetric dimethylarginine; partial; by PRMT1. Residue S58 is modified to Phosphoserine. The residue at position 84 (T84) is a Phosphothreonine; by MAPK1. Residues K96 and K102 each participate in a glycyl lysine isopeptide (Lys-Gly) (interchain with G-Cter in SUMO2) cross-link. The segment at 100–260 is involved in homodimerization; that stretch reads ENKYLPELMA…VKKFLVPDMM (161 aa). S113 carries the post-translational modification Phosphoserine. K139 participates in a covalent cross-link: Glycyl lysine isopeptide (Lys-Gly) (interchain with G-Cter in SUMO2). At S150 the chain carries Phosphoserine. In terms of domain architecture, KH spans 171 to 197; that stretch reads NFVGKILGPQGNTIKRLQEETGAKISV. The residue at position 175 (K175) is an N6-acetyllysine; alternate. K175 participates in a covalent cross-link: Glycyl lysine isopeptide (Lys-Gly) (interchain with G-Cter in SUMO2); alternate. Position 183 is a phosphothreonine (T183). Over residues 280-293 the composition is skewed to low complexity; that stretch reads PSRGRGVPVRGRGA. Residues 280 to 316 form a disordered region; the sequence is PSRGRGVPVRGRGAAPPPPPVPRGRGVGPPRGALVRG. 3 positions are modified to omega-N-methylarginine: R282, R284, and R291. Residue R304 is modified to Asymmetric dimethylarginine; by PRMT1. A compositionally biased stretch (low complexity) spans 307 to 316; the sequence is GPPRGALVRG. R310, R315, R320, and R325 each carry omega-N-methylarginine; by PRMT1. Position 320 is a dimethylated arginine; in A2780 ovarian carcinoma cell line (R320). Residues 327–346 form a disordered region; that stretch reads ATVTRGVPPPPTVRGAPAPR. A dimethylated arginine; in A2780 ovarian carcinoma cell line mark is found at R331 and R340. R331 carries the asymmetric dimethylarginine; alternate modification. At R331 the chain carries Omega-N-methylarginine; by PRMT1; alternate. The residue at position 340 (R340) is an Omega-N-methylarginine; by PRMT1. Residues 351–443 are interaction with HNRNPA1; sequence GIQRIPLPPP…AYREHPYGRY (93 aa). At Y387 the chain carries Phosphotyrosine. S390 bears the Phosphoserine mark. Positions 400 to 420 are interaction with ZBTB7A; the sequence is GHGEVQDSYEAYGQDDWNGTR. Residues 411–443 are disordered; it reads YGQDDWNGTRPSLKAPPARPVKGAYREHPYGRY. K432 participates in a covalent cross-link: Glycyl lysine isopeptide (Lys-Gly) (interchain with G-Cter in SUMO2). Basic and acidic residues predominate over residues 434-443; that stretch reads AYREHPYGRY. Phosphotyrosine; by PTK6 is present on residues Y435, Y440, and Y443.

It belongs to the KHDRBS family. In terms of assembly, self-associates to form homooligomers when bound to RNA, oligomerization appears to be limited when binding to proteins; dimerization increases RNA affinity. Forms a trimeric complex in the nucleus consisting of BANP, HDAC6 and KHDRBS1/SAM68; HDAC6 keeps KHDRBS1 in a deacetylated state which inhibits the inclusion of CD44 alternate exons. The complex is disrupted by MAPK1/MAPK3-mediated phosphorylation of BANP which results in BANP export to the cytoplasm. This facilitates acetylation of KHDRBS1 and CD44 variant exon inclusion. Interacts with KHDRBS3/SLIM-2. Interacts with KHDRBS2/SLIM-1; heterooligomer formation of KHDRBS family proteins may modulate RNA substrate specificity. Interacts with RASA1, LCK, FYN, PTPN6, PLCG1, GRB2, CBL, JAK3, PIK3R, STAT3, APC, HNRNPA1. Interacts with PTK6 (via SH3 and SH2 domains). Forms a complex with ILF2, ILF3, YLPM1, RBMX, NCOA5 and PPP1CA. Does not interact with TPR. Interacts with PRMT1. Binds WBP4/FBP21 (via WW domains), FNBP4/FBP30 (via WW domains). Interacts (via Arg/Gly-rich-flanked Pro-rich regions) with FYN (via the SH3 domain). Interacts with the non-receptor tyrosine kinase SRMS; the interaction leads to phosphorylation of KHDRBS1. Interacts with ZBTB7A; negatively regulates KHDRBS1 splicing activity toward BCL2L1. Post-translationally, tyrosine phosphorylated by several non-receptor tyrosine kinases including LCK, FYN and JAK3. Also tyrosine phosphorylated by the non-receptor tyrosine kinase SRMS in an EGF-dependent manner. Negatively correlates with ability to bind RNA but required for many interactions with proteins. Phosphorylation by PTK6 negatively regulates its RNA binding ability. Phosphorylation by PTK6 at Tyr-440 dictates the nuclear localization of KHDRBS1. Phosphorylation at Tyr-387 disrupts interaction with APC. Phosphorylation at tyrosine residues by FYN inverts activity on modulation of BCL2L1 alternative splicing. Acetylated. Positively correlates with ability to bind RNA. Deacetylated by HDAC6; this regulates alternative splicing by inhibiting the inclusion of CD44 alternate exons. In terms of processing, arginine methylation is required for nuclear localization. Also can affect interaction with other proteins. Inhibits interaction with Src-like SH3 domains, but not interaction with WW domains of WBP4/FBP21 and FNBP4/FBP30. In terms of tissue distribution, ubiquitously expressed in all tissue examined. Isoform 1 is expressed at lower levels in brain, skeletal muscle, and liver whereas isoform 3 is intensified in skeletal muscle and in liver.

The protein resides in the nucleus. Its subcellular location is the cytoplasm. It is found in the membrane. In terms of biological role, recruited and tyrosine phosphorylated by several receptor systems, for example the T-cell, leptin and insulin receptors. Once phosphorylated, functions as an adapter protein in signal transduction cascades by binding to SH2 and SH3 domain-containing proteins. Role in G2-M progression in the cell cycle. Represses CBP-dependent transcriptional activation apparently by competing with other nuclear factors for binding to CBP. Also acts as a putative regulator of mRNA stability and/or translation rates and mediates mRNA nuclear export. Positively regulates the association of constitutive transport element (CTE)-containing mRNA with large polyribosomes and translation initiation. According to some authors, is not involved in the nucleocytoplasmic export of unspliced (CTE)-containing RNA species according to. RNA-binding protein that plays a role in the regulation of alternative splicing and influences mRNA splice site selection and exon inclusion. Binds to RNA containing 5'-[AU]UAA-3' as a bipartite motif spaced by more than 15 nucleotides. Binds poly(A). Can regulate CD44 alternative splicing in a Ras pathway-dependent manner. In cooperation with HNRNPA1 modulates alternative splicing of BCL2L1 by promoting splicing toward isoform Bcl-X(S), and of SMN1. Can regulate alternative splicing of NRXN1 and NRXN3 in the laminin G-like domain 6 containing the evolutionary conserved neurexin alternative spliced segment 4 (AS4) involved in neurexin selective targeting to postsynaptic partners. In a neuronal activity-dependent manner cooperates synergistically with KHDRBS2/SLIM-1 in regulation of NRXN1 exon skipping at AS4. The cooperation with KHDRBS2/SLIM-1 is antagonistic for regulation of NXRN3 alternative splicing at AS4. Its function is as follows. Isoform 3, which is expressed in growth-arrested cells only, inhibits S phase. The chain is KH domain-containing, RNA-binding, signal transduction-associated protein 1 from Homo sapiens (Human).